The sequence spans 407 residues: Protease ElaD (407 aa).

His-231 is an active-site residue. Cys-317 (nucleophile) is an active-site residue.

It belongs to the peptidase C79 family.

Its function is as follows. Protease that can act as an efficient and specific deubiquitinating enzyme in vitro. Does not possess desumoylating and deneddylating activities. The physiological substrate is unknown. The chain is Protease ElaD (elaD) from Escherichia coli O157:H7.